Here is a 191-residue protein sequence, read N- to C-terminus: Molybdenum cofactor guanylyltransferase (191 aa).

GTP-binding positions include 13–15 (LAG), K26, D72, and D102. D102 is a Mg(2+) binding site.

It belongs to the MobA family. As to quaternary structure, monomer. The cofactor is Mg(2+).

It localises to the cytoplasm. It catalyses the reaction Mo-molybdopterin + GTP + H(+) = Mo-molybdopterin guanine dinucleotide + diphosphate. Transfers a GMP moiety from GTP to Mo-molybdopterin (Mo-MPT) cofactor (Moco or molybdenum cofactor) to form Mo-molybdopterin guanine dinucleotide (Mo-MGD) cofactor. This is Molybdenum cofactor guanylyltransferase from Pseudomonas putida (Arthrobacter siderocapsulatus).